A 324-amino-acid polypeptide reads, in one-letter code: Probable peptidylglycine alpha-hydroxylating monooxygenase 1 (324 aa).

The first 22 residues, 1–22 (MPRFYLLSSCALLAFATSFCNA), serve as a signal peptide directing secretion. 2 disulfides stabilise this stretch: Cys41/Cys85 and Cys73/Cys101. Cu cation is bound by residues His66 and His67. His142 serves as a coordination point for Cu cation. Asn182 carries an N-linked (GlcNAc...) asparagine glycan. Residues His207, His209, and Met284 each contribute to the Cu cation site. Cys264 and Cys285 are joined by a disulfide.

It belongs to the copper type II ascorbate-dependent monooxygenase family. It depends on Cu(2+) as a cofactor.

It is found in the secreted. The enzyme catalyses a [peptide]-C-terminal glycine + 2 L-ascorbate + O2 = a [peptide]-C-terminal (2S)-2-hydroxyglycine + 2 monodehydro-L-ascorbate radical + H2O. In terms of biological role, monooxygenase that catalyzes an essential reaction in C-terminal alpha-amidation of peptides. Produces an unstable peptidyl(2-hydroxyglycine) intermediate. C-terminal amidation of peptides such as neuropeptides is essential for full biological activity. The polypeptide is Probable peptidylglycine alpha-hydroxylating monooxygenase 1 (Caenorhabditis elegans).